The sequence spans 261 residues: 3-hydroxyacyl-CoA dehydrogenase type-2 (261 aa).

A2 carries the post-translational modification N-acetylalanine. Positions 20 and 41 each coordinate NAD(+). K53 bears the N6-acetyllysine; alternate mark. An N6-succinyllysine; alternate modification is found at K53. Residue V65 participates in NAD(+) binding. The residue at position 69 (K69) is an N6-acetyllysine. An NAD(+)-binding site is contributed by C91. Residues K99 and K105 each carry the N6-acetyllysine modification. An N6-acetyllysine; alternate modification is found at K107. N6-succinyllysine; alternate is present on K107. S155 provides a ligand contact to substrate. NAD(+)-binding residues include Y168, K172, F201, and T203. The active-site Proton acceptor is Y168. N6-acetyllysine; alternate is present on K212. K212 is subject to N6-succinyllysine; alternate.

Belongs to the short-chain dehydrogenases/reductases (SDR) family. In terms of assembly, homotetramer. Component of mitochondrial ribonuclease P, a complex composed of TRMT10C/MRPP1, HSD17B10/MRPP2 and PRORP/MRPP3. Interacts with TRMT10C/MRPP1; forming the MRPP1-MRPP2 subcomplex of the mitochondrial ribonuclease P complex.

Its subcellular location is the mitochondrion. It localises to the mitochondrion matrix. The protein localises to the mitochondrion nucleoid. The catalysed reaction is a (3S)-3-hydroxyacyl-CoA + NAD(+) = a 3-oxoacyl-CoA + NADH + H(+). It catalyses the reaction (2S,3S)-3-hydroxy-2-methylbutanoyl-CoA + NAD(+) = 2-methyl-3-oxobutanoyl-CoA + NADH + H(+). The enzyme catalyses testosterone + NAD(+) = androst-4-ene-3,17-dione + NADH + H(+). It carries out the reaction 5alpha-androstane-3alpha,17beta-diol + NAD(+) = 17beta-hydroxy-5alpha-androstan-3-one + NADH + H(+). The catalysed reaction is 17beta-estradiol + NAD(+) = estrone + NADH + H(+). It catalyses the reaction cholate + NAD(+) = 3alpha,12alpha-dihydroxy-7-oxo-5beta-cholanate + NADH + H(+). The enzyme catalyses (3S)-3-hydroxybutanoyl-CoA + NAD(+) = acetoacetyl-CoA + NADH + H(+). It carries out the reaction (3S)-hydroxyoctanoyl-CoA + NAD(+) = 3-oxooctanoyl-CoA + NADH + H(+). The catalysed reaction is (3S)-hydroxyhexadecanoyl-CoA + NAD(+) = 3-oxohexadecanoyl-CoA + NADH + H(+). It catalyses the reaction 17beta-hydroxy-5alpha-androstan-3-one + NAD(+) = 5alpha-androstan-3,17-dione + NADH + H(+). The enzyme catalyses 5alpha-pregnan-20beta-ol-3-one + NAD(+) = 5alpha-pregnane-3,20-dione + NADH + H(+). It carries out the reaction 3alpha-hydroxy-5alpha-pregnan-20-one + NAD(+) = 5alpha-pregnane-3,20-dione + NADH + H(+). The catalysed reaction is cortisone + NAD(+) = 17alpha-hydroxypregn-4-en-3,11,20-trione-21-al + NADH + H(+). It catalyses the reaction 11-dehydrocorticosterone + NAD(+) = pregn-4-ene-3,11,20,21-tetraone + NADH + H(+). The enzyme catalyses cortisol + NAD(+) = 11beta,17alpha-dihydroxypregn-4-ene-3,20,21-trione + NADH + H(+). It carries out the reaction chenodeoxycholate + NAD(+) = 7-oxolithocholate + NADH + H(+). The catalysed reaction is ursodeoxycholate + NAD(+) = 7-oxolithocholate + NADH + H(+). It catalyses the reaction 3beta,7beta-dihydroxy-5beta-cholan-24-oate + NAD(+) = 3beta-hydroxy-7-oxo-5beta-cholan-24-oate + NADH + H(+). The protein operates within amino-acid degradation; L-isoleucine degradation. It participates in lipid metabolism; fatty acid beta-oxidation. Its pathway is steroid metabolism. It functions in the pathway lipid metabolism; bile acid biosynthesis. In terms of biological role, mitochondrial dehydrogenase involved in pathways of fatty acid, branched-chain amino acid and steroid metabolism. Acts as (S)-3-hydroxyacyl-CoA dehydrogenase in mitochondrial fatty acid beta-oxidation, a major degradation pathway of fatty acids. Catalyzes the third step in the beta-oxidation cycle, namely the reversible conversion of (S)-3-hydroxyacyl-CoA to 3-ketoacyl-CoA. Preferentially accepts straight medium- and short-chain acyl-CoA substrates with highest efficiency for (3S)-hydroxybutanoyl-CoA. Acts as 3-hydroxy-2-methylbutyryl-CoA dehydrogenase in branched-chain amino acid catabolic pathway. Catalyzes the oxidation of 3-hydroxy-2-methylbutanoyl-CoA into 2-methyl-3-oxobutanoyl-CoA, a step in isoleucine degradation pathway. Has hydroxysteroid dehydrogenase activity toward steroid hormones and bile acids. Catalyzes the oxidation of 3alpha-, 17beta-, 20beta- and 21-hydroxysteroids and 7alpha- and 7beta-hydroxy bile acids. Oxidizes allopregnanolone/brexanolone at the 3alpha-hydroxyl group, which is known to be critical for the activation of gamma-aminobutyric acid receptors (GABAARs) chloride channel. Has phospholipase C-like activity toward cardiolipin and its oxidized species. Likely oxidizes the 2'-hydroxyl in the head group of cardiolipin to form a ketone intermediate that undergoes nucleophilic attack by water and fragments into diacylglycerol, dihydroxyacetone and orthophosphate. Has higher affinity for cardiolipin with oxidized fatty acids and may degrade these species during the oxidative stress response to protect cells from apoptosis. By interacting with intracellular amyloid-beta, it may contribute to the neuronal dysfunction associated with Alzheimer disease (AD). Essential for structural and functional integrity of mitochondria. In addition to mitochondrial dehydrogenase activity, moonlights as a component of mitochondrial ribonuclease P, a complex that cleaves tRNA molecules in their 5'-ends. Together with TRMT10C/MRPP1, forms a subcomplex of the mitochondrial ribonuclease P, named MRPP1-MRPP2 subcomplex, which displays functions that are independent of the ribonuclease P activity. The MRPP1-MRPP2 subcomplex catalyzes the formation of N(1)-methylguanine and N(1)-methyladenine at position 9 (m1G9 and m1A9, respectively) in tRNAs; HSD17B10/MRPP2 acting as a non-catalytic subunit. The MRPP1-MRPP2 subcomplex also acts as a tRNA maturation platform: following 5'-end cleavage by the mitochondrial ribonuclease P complex, the MRPP1-MRPP2 subcomplex enhances the efficiency of 3'-processing catalyzed by ELAC2, retains the tRNA product after ELAC2 processing and presents the nascent tRNA to the mitochondrial CCA tRNA nucleotidyltransferase TRNT1 enzyme. Associates with mitochondrial DNA complexes at the nucleoids to initiate RNA processing and ribosome assembly. In Mus musculus (Mouse), this protein is 3-hydroxyacyl-CoA dehydrogenase type-2 (Hsd17b10).